Reading from the N-terminus, the 299-residue chain is Glutamyl-Q tRNA(Asp) synthetase (299 aa).

Residues 9–13 (RFAPS) and Glu-45 each bind L-glutamate. The short motif at 12–22 (PSPTGPLHFGS) is the 'HIGH' region element. Zn(2+) is bound by residues Cys-101, Cys-103, and Cys-118. Residues Tyr-170 and Arg-188 each contribute to the L-glutamate site. A 'KMSKS' region motif is present at residues 226 to 230 (KLSKS). Position 229 (Lys-229) interacts with ATP. A disordered region spans residues 279–299 (QLLPRQRQRDRATCAYERQRD). Residues 285 to 299 (RQRDRATCAYERQRD) are compositionally biased toward basic and acidic residues.

Belongs to the class-I aminoacyl-tRNA synthetase family. GluQ subfamily. The cofactor is Zn(2+).

Functionally, catalyzes the tRNA-independent activation of glutamate in presence of ATP and the subsequent transfer of glutamate onto a tRNA(Asp). Glutamate is transferred on the 2-amino-5-(4,5-dihydroxy-2-cyclopenten-1-yl) moiety of the queuosine in the wobble position of the QUC anticodon. This chain is Glutamyl-Q tRNA(Asp) synthetase, found in Xanthomonas oryzae pv. oryzae (strain KACC10331 / KXO85).